The following is a 23-amino-acid chain: GLKEIFKAGLGSLVKGIAAHVAN.

Asn23 carries the asparagine amide modification.

As to expression, expressed by the skin glands.

Its subcellular location is the secreted. The protein localises to the target cell membrane. Its function is as follows. Antibacterial peptide with amphipathic alpha-helical structure. Shows selective growth inhibitory activity against the Gram-negative bacteria E.coli (MIC=25 uM). Has a weak hemolytic activity against human erythrocytes (LC(50)=200 uM). Is not active against S.aureus (MIC=200 uM). The sequence is that of Alyteserin-1b from Alytes obstetricans (Common midwife toad).